The primary structure comprises 179 residues: Protein PLASTID REDOX INSENSITIVE 2, chloroplastic (179 aa).

A chloroplast-targeting transit peptide spans 1 to 69 (MASMHEALFS…SLSRRGFVCR (69 aa)).

Binds DNA when in complex with CSP41b.

It is found in the plastid. It localises to the chloroplast stroma. The protein resides in the chloroplast nucleoid. Its function is as follows. Involved in redox-mediated retrograde signaling to synchronize the expression of photosynthetic genes from both the nuclear and plastidic genomes, especially in excess light conditions. Required for full expression of genes transcribed by the plastid-encoded RNA polymerase (PEP). Essential for embryo development. This chain is Protein PLASTID REDOX INSENSITIVE 2, chloroplastic, found in Arabidopsis thaliana (Mouse-ear cress).